The primary structure comprises 50 residues: Large ribosomal subunit protein bL33 (50 aa).

The protein belongs to the bacterial ribosomal protein bL33 family.

The polypeptide is Large ribosomal subunit protein bL33 (Solibacter usitatus (strain Ellin6076)).